A 312-amino-acid chain; its full sequence is Methionyl-tRNA formyltransferase (312 aa).

Position 109-112 (109-112 (SLLP)) interacts with (6S)-5,6,7,8-tetrahydrofolate.

Belongs to the Fmt family.

The enzyme catalyses L-methionyl-tRNA(fMet) + (6R)-10-formyltetrahydrofolate = N-formyl-L-methionyl-tRNA(fMet) + (6S)-5,6,7,8-tetrahydrofolate + H(+). In terms of biological role, attaches a formyl group to the free amino group of methionyl-tRNA(fMet). The formyl group appears to play a dual role in the initiator identity of N-formylmethionyl-tRNA by promoting its recognition by IF2 and preventing the misappropriation of this tRNA by the elongation apparatus. This is Methionyl-tRNA formyltransferase from Ruminiclostridium cellulolyticum (strain ATCC 35319 / DSM 5812 / JCM 6584 / H10) (Clostridium cellulolyticum).